We begin with the raw amino-acid sequence, 230 residues long: Cytochrome b6-f complex iron-sulfur subunit, chloroplastic (230 aa).

A chloroplast-targeting transit peptide spans 1–51 (MASFTLSSATPSQLCSSKNGMFAPSLALAKAGRVNVLISKERIRGMKLTCQ). A helical membrane pass occupies residues 73 to 93 (LLGALSLPTGYMLLPYASFFV). Positions 116–212 (AAEWLKTHAP…CDVDDGKVVF (97 aa)) constitute a Rieske domain. [2Fe-2S] cluster is bound by residues cysteine 158, histidine 160, cysteine 176, and histidine 179. A disulfide bridge connects residues cysteine 163 and cysteine 178.

The protein belongs to the Rieske iron-sulfur protein family. In terms of assembly, the 4 large subunits of the cytochrome b6-f complex are cytochrome b6, subunit IV (17 kDa polypeptide, petD), cytochrome f and the Rieske protein, while the 4 small subunits are petG, petL, petM and petN. The complex functions as a dimer. It depends on [2Fe-2S] cluster as a cofactor.

It localises to the plastid. Its subcellular location is the chloroplast thylakoid membrane. It catalyses the reaction 2 oxidized [plastocyanin] + a plastoquinol + 2 H(+)(in) = 2 reduced [plastocyanin] + a plastoquinone + 4 H(+)(out). Component of the cytochrome b6-f complex, which mediates electron transfer between photosystem II (PSII) and photosystem I (PSI), cyclic electron flow around PSI, and state transitions. This is Cytochrome b6-f complex iron-sulfur subunit, chloroplastic (petC) from Spinacia oleracea (Spinach).